Reading from the N-terminus, the 742-residue chain is Synaptic vesicle glycoprotein 2A (742 aa).

The interval 1–57 is interaction with SYT1; the sequence is MEEGFRDRAAFIRGAKDIAKEVKKHATKKVVKGLDRVQDEYSRRSYSRFEEEDDDDD. Residues 1–169 lie on the Cytoplasmic side of the membrane; it reads MEEGFRDRAA…GHGRFQWTLY (169 aa). The span at 32 to 49 shows a compositional bias: basic and acidic residues; that stretch reads KGLDRVQDEYSRRSYSRF. A disordered region spans residues 32–144; sequence KGLDRVQDEY…GRGEAQRRKE (113 aa). Serine 80 and serine 81 each carry phosphoserine. Threonine 84 carries the post-translational modification Phosphothreonine. A compositionally biased stretch (gly residues) spans 122 to 137; sequence VRGGLGDGEGPPGGRG. A helical transmembrane segment spans residues 170–190; it reads FVLGLALMADGVEVFVVGFVL. Residues 191 to 205 are Extracellular-facing; that stretch reads PSAEKDMCLSDSNKG. Residues 206-226 traverse the membrane as a helical segment; it reads MLGLIVYLGMMVGAFLWGGLA. The Cytoplasmic segment spans residues 227–233; that stretch reads DRLGRRQ. Residues 234–254 form a helical membrane-spanning segment; that stretch reads CLLISLSVNSVFAFFSSFVQG. Over 255-262 the chain is Extracellular; it reads YGTFLFCR. Residues 263 to 283 form a helical membrane-spanning segment; sequence LLSGVGIGGSIPIVFSYFSEF. The Cytoplasmic segment spans residues 284 to 294; the sequence is LAQEKRGEHLS. A helical transmembrane segment spans residues 295 to 315; sequence WLCMFWMIGGVYAAAMAWAII. At 316–334 the chain is on the extracellular side; that stretch reads PHYGWSFQMGSAYQFHSWR. A helical membrane pass occupies residues 335–355; it reads VFVLVCAFPSVFAIGALTTQP. Residues 356–447 lie on the Cytoplasmic side of the membrane; that stretch reads ESPRFFLENG…CFGPEYRRIT (92 aa). Residue serine 393 is modified to Phosphoserine. Residues 448-468 traverse the membrane as a helical segment; the sequence is LMMMGVWFTMSFSYYGLTVWF. Residues 469–598 are Extracellular-facing; that stretch reads PDMIRHLQAV…GTGEGAYMVY (130 aa). A Phosphotyrosine modification is found at tyrosine 480. 3 N-linked (GlcNAc...) asparagine glycosylation sites follow: asparagine 498, asparagine 548, and asparagine 573. Residues 599–619 form a helical membrane-spanning segment; sequence FVSFLGTLAVLPGNIVSALLM. The Cytoplasmic segment spans residues 620–626; that stretch reads DKIGRLR. Residues 627-647 form a helical membrane-spanning segment; it reads MLAGSSVMSCVSCFFLSFGNS. Over 648–651 the chain is Extracellular; it reads ESAM. The helical transmembrane segment at 652-672 threads the bilayer; sequence IALLCLFGGVSIASWNALDVL. Over 673 to 685 the chain is Cytoplasmic; sequence TVELYPSDKRTTA. A helical transmembrane segment spans residues 686–708; it reads FGFLNALCKLAAVLGISIFTSFV. Over 709-712 the chain is Extracellular; it reads GITK. The helical transmembrane segment at 713 to 731 threads the bilayer; it reads AAPILFASAALALGSSLAL. At 732–742 the chain is on the cytoplasmic side; sequence KLPETRGQVLQ.

The protein belongs to the major facilitator superfamily. As to quaternary structure, interacts with SYT1/synaptotagmin-1 in a calcium-dependent manner. Binds the adapter protein complex AP-2. Post-translationally, phosphorylation by CK1 of the N-terminal cytoplasmic domain regulates interaction with SYT1. In terms of processing, N-glycosylated.

The protein resides in the presynapse. Its subcellular location is the cytoplasmic vesicle. It is found in the secretory vesicle. It localises to the synaptic vesicle membrane. In terms of biological role, plays a role in the control of regulated secretion in neural and endocrine cells, enhancing selectively low-frequency neurotransmission. Positively regulates vesicle fusion by maintaining the readily releasable pool of secretory vesicles. This Bos taurus (Bovine) protein is Synaptic vesicle glycoprotein 2A (SV2A).